The chain runs to 119 residues: Large ribosomal subunit protein bL20 (119 aa).

This sequence belongs to the bacterial ribosomal protein bL20 family.

Its function is as follows. Binds directly to 23S ribosomal RNA and is necessary for the in vitro assembly process of the 50S ribosomal subunit. It is not involved in the protein synthesizing functions of that subunit. The chain is Large ribosomal subunit protein bL20 from Methylocella silvestris (strain DSM 15510 / CIP 108128 / LMG 27833 / NCIMB 13906 / BL2).